Reading from the N-terminus, the 357-residue chain is Protein ORF58 (357 aa).

11 consecutive transmembrane segments (helical) span residues L20 to F40, I44 to L64, W78 to F98, V101 to A121, I132 to L152, F157 to F177, V219 to L239, V242 to G262, A270 to S290, C300 to I320, and M333 to N353.

It belongs to the herpesviridae BMRF2 family.

The protein resides in the virion membrane. It is found in the host cell membrane. Participates in rearrangement of cellular actin to increase intercellular contacts and thereby promotes virus cell-to-cell spreadin$g. The chain is Protein ORF58 (ORF58) from Homo sapiens (Human).